The chain runs to 160 residues: V-type proton ATPase subunit c (160 aa).

Over Met1–Tyr8 the chain is Vacuolar. The helical transmembrane segment at Ala9–Gly31 threads the bilayer. Residues Thr32–Asn53 lie on the Cytoplasmic side of the membrane. The helical transmembrane segment at Ile54–Val74 threads the bilayer. At Cys75–Gln90 the chain is on the vacuolar side. The helical transmembrane segment at Leu91–Gly112 threads the bilayer. Over Asp113–Arg124 the chain is Cytoplasmic. A helical membrane pass occupies residues Leu125–Leu150. Topologically, residues Asn151–Cys160 are vacuolar.

It belongs to the V-ATPase proteolipid subunit family. In terms of assembly, V-ATPase is a heteromultimeric enzyme composed of a peripheral catalytic V1 complex (components A to H) attached to an integral membrane V0 proton pore complex (components: a, c, c', c'', d, e, f and VOA1). The decameric c-ring forms the proton-conducting pore, and is composed of eight proteolipid subunits c, one subunit c' and one subunit c''.

The protein localises to the vacuole membrane. Functionally, proton-conducting pore forming subunit of the V0 complex of vacuolar(H+)-ATPase (V-ATPase), a multisubunit enzyme composed of a peripheral complex (V1) that hydrolyzes ATP and a membrane integral complex (V0) that translocates protons. V-ATPase is responsible for acidifying and maintaining the pH of intracellular compartments. This Saccharomyces cerevisiae (strain ATCC 204508 / S288c) (Baker's yeast) protein is V-type proton ATPase subunit c (VMA3).